A 146-amino-acid chain; its full sequence is MGFTAQQDALVGSSYEAFKQNLPSNSVLFYTLILEKAPAAKDMFSFLKASGPTHSPQLQAHAEKVFGLTRDAAAQLLAKGEVTLADASLGAVHVQKAVADPHFAVVKEALLKTVQAAVGDKWSEELSTAWGVAYDGLAAAIKKAMS.

A Globin domain is found at Gly-2–Ser-146. At Tyr-30 the chain carries Nitrated tyrosine. Ser-45 is a heme b binding site. Position 45 is a phosphoserine (Ser-45). O2 is bound at residue His-61. Heme b-binding residues include Lys-64, His-93, and Lys-96. At Tyr-134 the chain carries Nitrated tyrosine.

It belongs to the plant globin family. Monomer. Nitrated in effective nodules and particularly in hypoxic conditions; this mechanism may play a protective role in the symbiosis by buffering toxic peroxynitrite NO(2)(-). Nitration level decrease during nodule senescence. Post-translationally, phosphorylation at Ser-45 disrupts the molecular environment of its porphyrin ring oxygen binding pocket, thus leading to a reduced oxygen consumption and to the delivery of oxygen O(2) to symbiosomes. As to expression, specifically and strongly expressed in root nodules and at low levels in seedlings.

The protein resides in the cytoplasm. The protein localises to the cytosol. Its subcellular location is the nucleus. Leghemoglobin that reversibly binds oxygen O(2) through a pentacoordinated heme iron. In root nodules, facilitates the diffusion of oxygen to the bacteroids while preventing the bacterial nitrogenase from being inactivated by buffering dioxygen, nitric oxide and carbon monoxide, and promoting the formation of reactive oxygen species (ROS, e.g. H(2)O(2)). This role is essential for symbiotic nitrogen fixation (SNF). The chain is Leghemoglobin 2 from Lotus japonicus (Lotus corniculatus var. japonicus).